Reading from the N-terminus, the 266-residue chain is Luciferase (266 aa).

A helical transmembrane segment spans residues 22–41 (GLAAACCALAVASTIAFPYI).

This sequence belongs to the fungal luciferase family.

It localises to the membrane. It catalyses the reaction 3-hydroxyhispidin + O2 = (E)-caffeoylpyruvate + hnu + CO2. The catalysed reaction is 3-hydroxyhispidin + O2 = 4-[(E)-2-(3,4-dihydroxyphenyl)ethenyl]-1,7-dihydroxy-2,3,5-trioxabicyclo[2.2.2]oct-7-en-6-one. In terms of biological role, luciferase; part of the gene cluster that mediates the fungal bioluminescence cycle. Uses the fungal luciferin 3-hydroxyhispidin as a substrate to produce an endoperoxide as a high-energy intermediate with decomposition that yields oxyluciferin (also known as caffeoylpyruvate) and light emission. The fungal bioluminescence cycle begins with the hispidin synthetase that catalyzes the formation of hispidin which is further hydroxylated by the hispidin-3-hydroxylase, yielding the fungal luciferin 3-hydroxyhispidin. The luciferase then produces an endoperoxide as a high-energy intermediate with decomposition that yields oxyluciferin and light emission. Oxyluciferin can be recycled to caffeic acid by caffeoylpyruvate hydrolase. The polypeptide is Luciferase (Armillaria gallica (Bulbous honey fungus)).